A 228-amino-acid polypeptide reads, in one-letter code: LexA repressor (228 aa).

Residues 28-48 (IREIGEALDIRSTNGVNDHLK) constitute a DNA-binding region (H-T-H motif). Residues serine 146 and lysine 183 each act as for autocatalytic cleavage activity in the active site.

It belongs to the peptidase S24 family. Homodimer.

The enzyme catalyses Hydrolysis of Ala-|-Gly bond in repressor LexA.. Functionally, represses a number of genes involved in the response to DNA damage (SOS response), including recA and lexA. In the presence of single-stranded DNA, RecA interacts with LexA causing an autocatalytic cleavage which disrupts the DNA-binding part of LexA, leading to derepression of the SOS regulon and eventually DNA repair. The protein is LexA repressor of Anaeromyxobacter dehalogenans (strain 2CP-1 / ATCC BAA-258).